The sequence spans 62 residues: Conotoxin Qc5.2 (62 aa).

A signal peptide spans 1–22 (MRCVPVFIILLLLSPSAPSVDA). A propeptide spanning residues 23 to 48 (HPMTKDDVPQASLHDDAKRTLQVPWM) is cleaved from the precursor. Val60 carries the valine amide modification.

It belongs to the conotoxin T superfamily. Contains 2 disulfide bonds that can be either 'C1-C3, C2-C4' or 'C1-C4, C2-C3', since these disulfide connectivities have been observed for conotoxins with cysteine framework V (for examples, see AC P0DQQ7 and AC P81755). Expressed by the venom duct.

It localises to the secreted. The chain is Conotoxin Qc5.2 from Conus quercinus (Oak cone).